The chain runs to 778 residues: Acyl-homoserine lactone acylase PvdQ (778 aa).

A signal peptide spans 1-25 (MTISRQFTGLTLAGLFLGLSLSAQA). Residues 196 to 218 (IENNARAYQLADTRLQRFALDRG) constitute a propeptide, spacer peptide. S219 serves as the catalytic Nucleophile.

The protein belongs to the peptidase S45 family. In terms of assembly, heterodimer of an alpha subunit and a beta subunit processed from the same precursor.

It localises to the periplasm. The catalysed reaction is an N-acyl-L-homoserine lactone + H2O = L-homoserine lactone + a carboxylate. In terms of biological role, catalyzes the deacylation of acyl-homoserine lactone (AHL or acyl-HSL), releasing homoserine lactone (HSL) and the corresponding fatty acid. Possesses a specificity for the degradation of long-chain acyl-HSLs (side chains of 11 to 14 carbons in length). In Pseudomonas fluorescens (strain Pf0-1), this protein is Acyl-homoserine lactone acylase PvdQ (pvdQ).